The primary structure comprises 808 residues: Phenylalanine--tRNA ligase beta subunit (808 aa).

Positions 40 to 149 constitute a tRNA-binding domain; the sequence is RPELDFVKIV…DQAEVGKTIR (110 aa). The region spanning 407-484 is the B5 domain; sequence HKEVRIHTDI…RTKGYDTIQV (78 aa). Mg(2+) contacts are provided by aspartate 462, aspartate 468, glutamate 471, and glutamate 472. The region spanning 716-808 is the FDX-ACB domain; that stretch reads SQFPEAEIDL…LAGKNGFVLR (93 aa).

This sequence belongs to the phenylalanyl-tRNA synthetase beta subunit family. Type 1 subfamily. As to quaternary structure, tetramer of two alpha and two beta subunits. Mg(2+) serves as cofactor.

Its subcellular location is the cytoplasm. The enzyme catalyses tRNA(Phe) + L-phenylalanine + ATP = L-phenylalanyl-tRNA(Phe) + AMP + diphosphate + H(+). This Leptospira interrogans serogroup Icterohaemorrhagiae serovar Lai (strain 56601) protein is Phenylalanine--tRNA ligase beta subunit.